A 71-amino-acid polypeptide reads, in one-letter code: Small ribosomal subunit protein bS18 (71 aa).

This sequence belongs to the bacterial ribosomal protein bS18 family. Part of the 30S ribosomal subunit. Forms a tight heterodimer with protein bS6.

In terms of biological role, binds as a heterodimer with protein bS6 to the central domain of the 16S rRNA, where it helps stabilize the platform of the 30S subunit. This is Small ribosomal subunit protein bS18 from Acaryochloris marina (strain MBIC 11017).